Here is a 463-residue protein sequence, read N- to C-terminus: Flotillin-like protein 2 (463 aa).

Cysteine 35 carries S-palmitoyl cysteine lipidation. A coiled-coil region spans residues 305-354 (EYETKVQEANWELYNKQKQAEAVLYEKQKQAEAQKAEADATFYSKQKEAE).

Belongs to the band 7/mec-2 family. Flotillin subfamily. May be palmitoylated.

The protein resides in the cell membrane. It localises to the membrane. It is found in the caveola. Functionally, may act as a scaffolding protein within caveolar membranes, functionally participating in formation of caveolae or caveolae-like vesicles. The sequence is that of Flotillin-like protein 2 (FLOT2) from Arabidopsis thaliana (Mouse-ear cress).